Consider the following 257-residue polypeptide: Uxu operon transcriptional regulator (257 aa).

An HTH gntR-type domain is found at 8–76; it reads QRPYQEVGAM…RGAGIYVLDN (69 aa). The H-T-H motif DNA-binding region spans 36 to 55; it reads EREIAEMLDVTRTVVREALI.

Functionally, repressor for the uxuRBA operon. In Escherichia coli (strain K12), this protein is Uxu operon transcriptional regulator (uxuR).